The chain runs to 498 residues: Ribulose bisphosphate carboxylase large chain (498 aa).

Residues 1 to 2 (MS) constitute a propeptide that is removed on maturation. The residue at position 3 (Pro3) is an N-acetylproline. Residue Lys14 is modified to N6,N6,N6-trimethyllysine. Substrate is bound by residues Asn123 and Thr173. The active-site Proton acceptor is Lys175. Residue Lys177 coordinates substrate. Residues Lys201, Asp203, and Glu204 each coordinate Mg(2+). An N6-carboxylysine modification is found at Lys201. His294 serves as the catalytic Proton acceptor. Residues Arg295, His327, and Ser379 each coordinate substrate. The disordered stretch occupies residues 471–498 (PVDTLDPNDKKQRDNEDTLADKLFGDKG).

It belongs to the RuBisCO large chain family. Type I subfamily. Heterohexadecamer of 8 large chains and 8 small chains; disulfide-linked. The disulfide link is formed within the large subunit homodimers. The cofactor is Mg(2+). The disulfide bond which can form in the large chain dimeric partners within the hexadecamer appears to be associated with oxidative stress and protein turnover.

The protein localises to the plastid. The enzyme catalyses 2 (2R)-3-phosphoglycerate + 2 H(+) = D-ribulose 1,5-bisphosphate + CO2 + H2O. The catalysed reaction is D-ribulose 1,5-bisphosphate + O2 = 2-phosphoglycolate + (2R)-3-phosphoglycerate + 2 H(+). RuBisCO catalyzes two reactions: the carboxylation of D-ribulose 1,5-bisphosphate, the primary event in carbon dioxide fixation, as well as the oxidative fragmentation of the pentose substrate in the photorespiration process. Both reactions occur simultaneously and in competition at the same active site. The protein is Ribulose bisphosphate carboxylase large chain (rbcL) of Cuscuta reflexa (Southern Asian dodder).